A 338-amino-acid chain; its full sequence is Methionine import ATP-binding protein MetN 1 (338 aa).

Residues 2–241 (IEVRSVTKRF…PHSELGVGLL (240 aa)) enclose the ABC transporter domain. 38–45 (GQSGAGKT) lines the ATP pocket.

Belongs to the ABC transporter superfamily. Methionine importer (TC 3.A.1.24) family. In terms of assembly, the complex is composed of two ATP-binding proteins (MetN), two transmembrane proteins (MetI) and a solute-binding protein (MetQ).

The protein localises to the cell membrane. The enzyme catalyses L-methionine(out) + ATP + H2O = L-methionine(in) + ADP + phosphate + H(+). It carries out the reaction D-methionine(out) + ATP + H2O = D-methionine(in) + ADP + phosphate + H(+). Its function is as follows. Part of the ABC transporter complex MetNIQ involved in methionine import. Responsible for energy coupling to the transport system. The protein is Methionine import ATP-binding protein MetN 1 of Rhodococcus jostii (strain RHA1).